A 339-amino-acid polypeptide reads, in one-letter code: Ketol-acid reductoisomerase (NADP(+)) (339 aa).

A KARI N-terminal Rossmann domain is found at 1–182 (MRVYYDRDAD…GGGRAGIIET (182 aa)). Residues 24–27 (YGSQ), R48, S51, S53, and 83–86 (DELQ) contribute to the NADP(+) site. The active site involves H108. G134 provides a ligand contact to NADP(+). A KARI C-terminal knotted domain is found at 183-328 (TFKEECETDL…AKLRDMMPWI (146 aa)). Residues D191, E195, E227, and E231 each contribute to the Mg(2+) site. S252 contributes to the substrate binding site.

The protein belongs to the ketol-acid reductoisomerase family. Mg(2+) serves as cofactor.

The catalysed reaction is (2R)-2,3-dihydroxy-3-methylbutanoate + NADP(+) = (2S)-2-acetolactate + NADPH + H(+). It carries out the reaction (2R,3R)-2,3-dihydroxy-3-methylpentanoate + NADP(+) = (S)-2-ethyl-2-hydroxy-3-oxobutanoate + NADPH + H(+). It functions in the pathway amino-acid biosynthesis; L-isoleucine biosynthesis; L-isoleucine from 2-oxobutanoate: step 2/4. It participates in amino-acid biosynthesis; L-valine biosynthesis; L-valine from pyruvate: step 2/4. Its function is as follows. Involved in the biosynthesis of branched-chain amino acids (BCAA). Catalyzes an alkyl-migration followed by a ketol-acid reduction of (S)-2-acetolactate (S2AL) to yield (R)-2,3-dihydroxy-isovalerate. In the isomerase reaction, S2AL is rearranged via a Mg-dependent methyl migration to produce 3-hydroxy-3-methyl-2-ketobutyrate (HMKB). In the reductase reaction, this 2-ketoacid undergoes a metal-dependent reduction by NADPH to yield (R)-2,3-dihydroxy-isovalerate. The polypeptide is Ketol-acid reductoisomerase (NADP(+)) (Bradyrhizobium diazoefficiens (strain JCM 10833 / BCRC 13528 / IAM 13628 / NBRC 14792 / USDA 110)).